The chain runs to 89 residues: Acylphosphatase (89 aa).

The Acylphosphatase-like domain occupies 3–89 (RKEFLVSGRV…DTREKRFSTY (87 aa)). Active-site residues include Arg-18 and Asn-36.

This sequence belongs to the acylphosphatase family.

The enzyme catalyses an acyl phosphate + H2O = a carboxylate + phosphate + H(+). The sequence is that of Acylphosphatase (acyP) from Clostridium perfringens (strain ATCC 13124 / DSM 756 / JCM 1290 / NCIMB 6125 / NCTC 8237 / Type A).